Here is a 386-residue protein sequence, read N- to C-terminus: GTPase Obg (386 aa).

An Obg domain is found at 1-159 (MKFVDEAKIK…RNLLLELLLL (159 aa)). The region spanning 160-333 (ADVGMLGLPN…LCRDVVEYLE (174 aa)) is the OBG-type G domain. Residues 166–173 (GLPNAGKS), 191–195 (FTTLV), 213–216 (DIPG), 283–286 (NKTD), and 314–316 (AAI) each bind GTP. Mg(2+) is bound by residues Ser173 and Thr193.

Belongs to the TRAFAC class OBG-HflX-like GTPase superfamily. OBG GTPase family. Monomer. It depends on Mg(2+) as a cofactor.

It localises to the cytoplasm. Its function is as follows. An essential GTPase which binds GTP, GDP and possibly (p)ppGpp with moderate affinity, with high nucleotide exchange rates and a fairly low GTP hydrolysis rate. Plays a role in control of the cell cycle, stress response, ribosome biogenesis and in those bacteria that undergo differentiation, in morphogenesis control. This chain is GTPase Obg, found in Psychromonas ingrahamii (strain DSM 17664 / CCUG 51855 / 37).